The primary structure comprises 111 residues: Cytochrome c (111 aa).

Ala-1 is modified (N-acetylalanine). Heme c-binding residues include Cys-22, Cys-25, and His-26. Lys-80 is subject to N6,N6,N6-trimethyllysine. Met-88 contacts heme c. Lys-94 bears the N6,N6,N6-trimethyllysine mark.

The protein belongs to the cytochrome c family. In terms of processing, binds 1 heme c group covalently per subunit.

The protein resides in the mitochondrion intermembrane space. In terms of biological role, electron carrier protein. The oxidized form of the cytochrome c heme group can accept an electron from the heme group of the cytochrome c1 subunit of cytochrome reductase. Cytochrome c then transfers this electron to the cytochrome oxidase complex, the final protein carrier in the mitochondrial electron-transport chain. The chain is Cytochrome c from Gossypium barbadense (Sea Island cotton).